We begin with the raw amino-acid sequence, 151 residues long: Ribosome maturation factor RimP (151 aa).

Belongs to the RimP family.

It localises to the cytoplasm. In terms of biological role, required for maturation of 30S ribosomal subunits. The polypeptide is Ribosome maturation factor RimP (Hydrogenovibrio crunogenus (strain DSM 25203 / XCL-2) (Thiomicrospira crunogena)).